Here is a 338-residue protein sequence, read N- to C-terminus: Tagatose 1,6-diphosphate aldolase (338 aa).

This sequence belongs to the aldolase LacD family.

The catalysed reaction is D-tagatofuranose 1,6-bisphosphate = D-glyceraldehyde 3-phosphate + dihydroxyacetone phosphate. It functions in the pathway carbohydrate metabolism; D-tagatose 6-phosphate degradation; D-glyceraldehyde 3-phosphate and glycerone phosphate from D-tagatose 6-phosphate: step 2/2. This chain is Tagatose 1,6-diphosphate aldolase, found in Listeria monocytogenes serotype 4b (strain CLIP80459).